The following is a 181-amino-acid chain: Cytochrome c-type biogenesis protein CcmE (181 aa).

At 1 to 8 the chain is on the cytoplasmic side; sequence MNPRRKSR. A helical; Signal-anchor for type II membrane protein transmembrane segment spans residues 9 to 29; it reads LKVVVLIMFSVAVAAGLTLYA. Residues 30–181 lie on the Periplasmic side of the membrane; sequence LSQNIDLFYT…TFNTLQGESK (152 aa). H131 and Y135 together coordinate heme.

The protein belongs to the CcmE/CycJ family.

The protein localises to the cell inner membrane. Heme chaperone required for the biogenesis of c-type cytochromes. Transiently binds heme delivered by CcmC and transfers the heme to apo-cytochromes in a process facilitated by CcmF and CcmH. The chain is Cytochrome c-type biogenesis protein CcmE from Haemophilus ducreyi (strain 35000HP / ATCC 700724).